A 97-amino-acid polypeptide reads, in one-letter code: U6-theraphotoxin-Hhn1a 2 (97 aa).

Positions 1-33 are cleaved as a signal peptide; sequence MLIKQFSRRPKNMKVQILLAFAALFVLAVGSYA. The propeptide occupies 34 to 61; the sequence is SESKKLDLRDASFSAMFSADYQLNPQER. 3 disulfides stabilise this stretch: cysteine 63/cysteine 77, cysteine 70/cysteine 82, and cysteine 76/cysteine 89.

The protein belongs to the neurotoxin 10 (Hwtx-1) family. 12 (Hntx-12) subfamily. Expressed by the venom gland.

It localises to the secreted. In terms of biological role, ion channel inhibitor. This Cyriopagopus hainanus (Chinese bird spider) protein is U6-theraphotoxin-Hhn1a 2.